The following is a 179-amino-acid chain: Large ribosomal subunit protein uL5 (179 aa).

This sequence belongs to the universal ribosomal protein uL5 family. As to quaternary structure, part of the 50S ribosomal subunit; part of the 5S rRNA/L5/L18/L25 subcomplex. Contacts the 5S rRNA and the P site tRNA. Forms a bridge to the 30S subunit in the 70S ribosome.

Its function is as follows. This is one of the proteins that bind and probably mediate the attachment of the 5S RNA into the large ribosomal subunit, where it forms part of the central protuberance. In the 70S ribosome it contacts protein S13 of the 30S subunit (bridge B1b), connecting the 2 subunits; this bridge is implicated in subunit movement. Contacts the P site tRNA; the 5S rRNA and some of its associated proteins might help stabilize positioning of ribosome-bound tRNAs. The sequence is that of Large ribosomal subunit protein uL5 from Prochlorococcus marinus (strain NATL2A).